We begin with the raw amino-acid sequence, 265 residues long: Hydroxyethylthiazole kinase (265 aa).

Residue Met-50 coordinates substrate. Positions 125 and 171 each coordinate ATP. Gly-198 contacts substrate.

It belongs to the Thz kinase family. Mg(2+) is required as a cofactor.

It catalyses the reaction 5-(2-hydroxyethyl)-4-methylthiazole + ATP = 4-methyl-5-(2-phosphooxyethyl)-thiazole + ADP + H(+). It participates in cofactor biosynthesis; thiamine diphosphate biosynthesis; 4-methyl-5-(2-phosphoethyl)-thiazole from 5-(2-hydroxyethyl)-4-methylthiazole: step 1/1. Functionally, catalyzes the phosphorylation of the hydroxyl group of 4-methyl-5-beta-hydroxyethylthiazole (THZ). The chain is Hydroxyethylthiazole kinase from Salmonella agona (strain SL483).